Consider the following 954-residue polypeptide: Alpha-xylosidase BoGH31A (954 aa).

An N-terminal signal peptide occupies residues 1-20 (MIMNMKNIFYCLLPGLLLGA). Cysteine 21 carries N-palmitoyl cysteine lipidation. Cysteine 21 is lipidated: S-diacylglycerol cysteine. The PA14 domain maps to 227–366 (TGQEGALTGT…NPEEQGKQSW (140 aa)). Catalysis depends on residues aspartate 553 and glutamate 556. Aspartate 630 (proton donor) is an active-site residue.

This sequence belongs to the glycosyl hydrolase 31 family.

It localises to the cell inner membrane. The enzyme catalyses Hydrolysis of terminal, non-reducing alpha-D-xylose residues with release of alpha-D-xylose.. Its pathway is glucan metabolism; xyloglucan degradation. Catalyzes the liberation of alpha-xylose from the non-reducing terminal glucose of xyloglucan oligosaccharides in xyloglucan degradation, converting the 'X' to 'G' units. This Bacteroides ovatus (strain ATCC 8483 / DSM 1896 / JCM 5824 / BCRC 10623 / CCUG 4943 / NCTC 11153) protein is Alpha-xylosidase BoGH31A.